Here is a 757-residue protein sequence, read N- to C-terminus: Tyrosine-protein kinase HTK16 (757 aa).

Residues 10–102 enclose the SH2 1 domain; the sequence is WYHGKITREV…GLPCKLVDFC (93 aa). ANK repeat units follow at residues 115–147, 151–180, 184–214, 219–248, and 252–281; these read GLDT…NVNA, SGLT…DASA, NGRT…DFLK, NGWV…SMYP, and DGDT…NQPK. The 93-residue stretch at 287–379 folds into the SH2 2 domain; sequence WLHQNLDRNG…GLPTLLQFPV (93 aa). Disordered regions lie at residues 381 to 407 and 444 to 467; these read SAEN…PSRP and PKLP…QKGD. Over residues 455 to 467 the composition is skewed to polar residues; the sequence is EVPNSVNVGQKGD. Residues 484 to 740 form the Protein kinase domain; that stretch reads ISFGKELGVG…PTFNELHSTF (257 aa). Residues 490 to 498 and K516 each bind ATP; that span reads LGVGEFGSV. D608 serves as the catalytic Proton acceptor. Residue Y746 is modified to Phosphotyrosine.

It belongs to the protein kinase superfamily. Tyr protein kinase family. In terms of tissue distribution, epithelial cells.

It catalyses the reaction L-tyrosyl-[protein] + ATP = O-phospho-L-tyrosyl-[protein] + ADP + H(+). Its function is as follows. May be involved in signal transduction. The chain is Tyrosine-protein kinase HTK16 (HTK16) from Hydra vulgaris (Hydra).